A 1396-amino-acid polypeptide reads, in one-letter code: Melanoma inhibitory activity protein 2 (1396 aa).

The N-terminal stretch at 1–22 is a signal peptide; that stretch reads MAEVSVQRILLLVVSLAKCLEG. The Lumenal portion of the chain corresponds to 23–604; it reads TKLLAHLKKC…YGFMSSALSP (582 aa). Residues 39–101 enclose the SH3 domain; that stretch reads TLISRVLALR…PRDAVEIEEV (63 aa). Asn59 is a glycosylation site (N-linked (GlcNAc...) asparagine). Disordered stretches follow at residues 197 to 288 and 331 to 361; these read EGAG…VPDE and ESNP…TDKE. Residues 243 to 258 show a composition bias toward acidic residues; sequence SDTEPTQELALEEESD. Asn366 carries N-linked (GlcNAc...) asparagine glycosylation. Disordered regions lie at residues 396-421 and 525-557; these read DKGE…PEKE and PMEE…ELSV. An intramembrane segment occupies 605 to 625; that stretch reads IEILLESVVAALPEDMRADFN. Over 626–628 the chain is Lumenal; it reads PSG. The helical transmembrane segment at 629–649 threads the bilayer; the sequence is FSLELAVCVLSVGLLAVVLFL. At 650–1396 the chain is on the cytoplasmic side; sequence WRGFRSIRSR…AADPPETQEA (747 aa). Positions 651–1243 are mediates interaction with MIA3; sequence RGFRSIRSRF…RSYNMPSLDK (593 aa). 2 coiled-coil regions span residues 693 to 867 and 914 to 1082; these read YEGL…LVTS and AAKL…NRQK. Residues 1103–1396 form a disordered region; sequence PNTAFGREHS…AADPPETQEA (294 aa). The interval 1105 to 1396 is proline-rich domain (PRD); probably mediates interaction with COPII coat subunits; that stretch reads TAFGREHSPY…AADPPETQEA (292 aa). The span at 1135–1146 shows a compositional bias: low complexity; that stretch reads LLEGPLRLSPLL. Over residues 1165 to 1179 the composition is skewed to basic and acidic residues; it reads MNTERGESSYDRLSD. A compositionally biased stretch (polar residues) spans 1252-1269; it reads MESSGNGTKDNLGNSNVP. Composition is skewed to pro residues over residues 1331 to 1342 and 1351 to 1368; these read RDFPGPPLPPFP and GFPP…PPPH.

The protein belongs to the MIA/OTOR family. As to quaternary structure, interacts with MIA3. Interacts with the COPII coat subunits SEC23A, SEC23B and maybe SEC24C. Interacts with PREB; recruits PREB to endoplasmic reticulum exit sites. Interacts with APOB. As to expression, isoform 1 is expressed in liver (at protein level). Isoform 2 is highly expressed in liver and weakly in testis.

The protein resides in the endoplasmic reticulum membrane. Functionally, plays a role in the transport of cargos that are too large to fit into COPII-coated vesicles and require specific mechanisms to be incorporated into membrane-bound carriers and exported from the endoplasmic reticulum. Plays a role in the secretion of lipoproteins, pre-chylomicrons and pre-VLDLs, by participating in their export from the endoplasmic reticulum. Thereby, may play a role in cholesterol and triglyceride homeostasis. Required for collagen VII (COL7A1) secretion by loading COL7A1 into transport carriers and recruiting PREB/SEC12 at the endoplasmic reticulum exit sites. This chain is Melanoma inhibitory activity protein 2, found in Mus musculus (Mouse).